The chain runs to 367 residues: Gelsolin-like protein 1 (367 aa).

An actin binding region spans residues 1–185 (MATGLIKAKE…GQKQQIYVHE (185 aa)). Gelsolin-like repeat units follow at residues 56 to 141 (NFKV…ELFR) and 179 to 225 (QQIY…KAMQ). The tract at residues 106–109 (DEYG) is actin-actin interfilament contact point. The interval 186 to 295 (VPLVKERLDH…LKTTEVKRGA (110 aa)) is actin binding, Actin-severing. A disordered region spans residues 235–257 (PKAEAETLEDESTPESHKFYTSL). The Gelsolin-like 3 repeat unit spans residues 287-322 (KTTEVKRGAVNSKDFSSNDVFILDTGDQCFVWVGKG). The segment at 296–366 (VNSKDFSSND…LCKAFNVAIA (71 aa)) is actin-severing, Ca-sensitive.

The protein belongs to the villin/gelsolin family. Interacts with actin monomers and filaments. Expressed in circular and longitudinal muscle, pseudohearts, pharynx and gizzard. Also expressed in male germ cells at the proximal pole of primary spermatocytes in 16 cell-stage morulae, and in the distal parts of the spermatocytes in 32 and 64 cell-stage morulae. In the spermatids of the 128 cell-stage morulae it is expressed at the proximal pole of the elongated nucleus and the distal pole near the base of the flagellae.

It localises to the cytoplasm. Its subcellular location is the cytoskeleton. In terms of biological role, calcium-regulated protein that binds to the plus (or barbed) ends of actin monomers or filaments, preventing monomer exchange (end-blocking or capping). Can promote the assembly of monomers into filaments (nucleation) as well as sever existing filaments. This chain is Gelsolin-like protein 1, found in Lumbricus terrestris (Common earthworm).